The chain runs to 158 residues: Protein Smg homolog (158 aa).

This sequence belongs to the Smg family.

In Shewanella sp. (strain ANA-3), this protein is Protein Smg homolog.